The chain runs to 1152 residues: Syntaxin-binding protein 5 (1152 aa).

A disordered region spans residues 14–35 (TAGSSSASQQQQQQQHPPGNRE). Low complexity predominate over residues 17–28 (SSSASQQQQQQQ). 10 WD repeats span residues 62-95 (SALA…CYCQ), 102-141 (VIQL…SLKF), 146-182 (VTFC…GYVI), 201-235 (HISD…DYRY), 241-273 (IHSV…PAKP), 295-337 (PILK…KSTA), 345-379 (IVDF…LIDL), 401-478 (TCCE…YKLK), 506-620 (QIIS…ELVI), and 634-696 (TSLA…SGAG). 2 disordered regions span residues 555-596 (VDTP…GLRD) and 675-731 (SNDP…QKVN). A Phosphoserine modification is found at S693. Over residues 713–722 (SPTSGSSSPH) the composition is skewed to low complexity. Residues S724 and S760 each carry the phosphoserine modification. T763 carries the post-translational modification Phosphothreonine. S783 bears the Phosphoserine mark. The residue at position 785 (T785) is a Phosphothreonine. Position 786 is a phosphoserine (S786). 4 WD repeats span residues 795–852 (ISAL…SGTI), 861–935 (RMAF…QSCA), 940–984 (ITET…LDVY), and 998–1021 (CFAN…TYSQ). Positions 883-893 (NVAEEKDEKEK) are enriched in basic and acidic residues. The segment at 883-907 (NVAEEKDEKEKLKKRRPVSVSPSSS) is disordered. Phosphoserine occurs at positions 901 and 903. Residue T1040 is modified to Phosphothreonine. Phosphoserine is present on residues S1059 and S1132. One can recognise a v-SNARE coiled-coil homology domain in the interval 1087–1147 (GIEGVKGAAS…HEMMLKYKDK (61 aa)).

It belongs to the WD repeat L(2)GL family. As to quaternary structure, part of a complex that contains STX1, STXBP5, SNAP25 and SYT1. Interacts with STX1A and STX4A via its v-SNARE homology domain. Part of a complex that contains STXBP5, STX4A and SNAP23. In terms of tissue distribution, detected in heart, spleen, lung, skeletal muscle, liver and kidney (at protein level). Detected in brain, particularly in the olfactory bulb and in hippocampus. Detected in the tenia tecta and in the piriform layer of the brain cortex.

The protein resides in the cytoplasm. Its subcellular location is the cell membrane. The protein localises to the membrane. Its function is as follows. Plays a regulatory role in calcium-dependent exocytosis and neurotransmitter release. Inhibits membrane fusion between transport vesicles and the plasma membrane. May modulate the assembly of trans-SNARE complexes between transport vesicles and the plasma membrane. Competes with STXBP1 for STX1 binding. Inhibits translocation of GLUT4 from intracellular vesicles to the plasma membrane. The chain is Syntaxin-binding protein 5 (Stxbp5) from Mus musculus (Mouse).